Here is a 225-residue protein sequence, read N- to C-terminus: Insulin-induced gene 2 protein (225 aa).

The Cytoplasmic segment spans residues 1 to 28 (MAEGETESPRPKKRGPYISSVTSQSVNV). A helical membrane pass occupies residues 29 to 51 (VIRGVVLFFIGVFLALVLNLLQI). At 52–70 (QRNVTLFPPDVITSIFSSA) the chain is on the lumenal side. Residues 71 to 88 (WWVPPCCGTASAVIGLLY) traverse the membrane as a helical segment. Topologically, residues 89–103 (PCIDRHLGEPHKFKR) are cytoplasmic. Residues 104 to 126 (EWSSVMRCVAVFVGINHASAKVD) traverse the membrane as a helical segment. Residues 127 to 129 (FDN) lie on the Lumenal side of the membrane. Residues 130–148 (NFQFSLTLAALSVGLWWTF) form a helical membrane-spanning segment. Residues 149 to 153 (DRSRS) lie on the Cytoplasmic side of the membrane. A Phosphoserine modification is found at S151. A helical transmembrane segment spans residues 154-175 (GFGLGVGIAFLATVVTQLLVYN). Over 176 to 189 (GVYQYTSPDFLYVR) the chain is Lumenal. Residues 190-207 (SWLPCIFFAGGITMGNIG) traverse the membrane as a helical segment. Residues 208-225 (RQLAMYECKVIAEKSHQE) lie on the Cytoplasmic side of the membrane. The residue at position 215 (C215) is a Cysteine sulfenic acid (-SOH); alternate. C215 is covalently cross-linked (Glycyl cysteine thioester (Cys-Gly) (interchain with G-Cter in ubiquitin); alternate). A KxHxx motif is present at residues 219 to 225 (AEKSHQE).

Belongs to the INSIG family. As to quaternary structure, interacts with SCAP; interaction is direct and only takes place in the presence of sterols; it prevents interaction between SCAP and the coat protein complex II (COPII). Associates with the SCAP-SREBP complex (composed of SCAP and SREBF1/SREBP1 or SREBF2/SREBP2); association is mediated via its interaction with SCAP and only takes place in the presence of sterols. Interacts with RNF139. Interacts with RNF145. In terms of processing, phosphorylation at Ser-151 by PCK1 reduces binding to oxysterol, disrupting the interaction between INSIG2 and SCAP, thereby promoting nuclear translocation of SREBP proteins (SREBF1/SREBP1 or SREBF2/SREBP2) and subsequent transcription of downstream lipogenesis-related genes. Polyubiquitinated by AMFR/gp78 at Cys-215 in some tissues such as adipose tissues, undifferentiated myoblasts and liver, leading to its degradation. In differentiated myotubes, Cys-215 oxidation prevents ubiquitination at the same site, resulting in protein stabilization. Post-translationally, oxidized at Cys-215 in differentiated myotubes, preventing ubiquitination at the same site, and resulting in protein stabilization.

The protein localises to the endoplasmic reticulum membrane. Oxysterol-binding protein that mediates feedback control of cholesterol synthesis by controlling both endoplasmic reticulum to Golgi transport of SCAP and degradation of HMGCR. Acts as a negative regulator of cholesterol biosynthesis by mediating the retention of the SCAP-SREBP complex in the endoplasmic reticulum, thereby blocking the processing of sterol regulatory element-binding proteins (SREBPs) SREBF1/SREBP1 and SREBF2/SREBP2. Binds oxysterol, including 22-hydroxycholesterol, 24-hydroxycholesterol, 25-hydroxycholesterol and 27-hydroxycholesterol, regulating interaction with SCAP and retention of the SCAP-SREBP complex in the endoplasmic reticulum. In presence of oxysterol, interacts with SCAP, retaining the SCAP-SREBP complex in the endoplasmic reticulum, thereby preventing SCAP from escorting SREBF1/SREBP1 and SREBF2/SREBP2 to the Golgi. Sterol deprivation or phosphorylation by PCK1 reduce oxysterol-binding, disrupting the interaction between INSIG2 and SCAP, thereby promoting Golgi transport of the SCAP-SREBP complex, followed by processing and nuclear translocation of SREBF1/SREBP1 and SREBF2/SREBP2. Also regulates cholesterol synthesis by regulating degradation of HMGCR: initiates the sterol-mediated ubiquitin-mediated endoplasmic reticulum-associated degradation (ERAD) of HMGCR via recruitment of the reductase to the ubiquitin ligase RNF139. In Rattus norvegicus (Rat), this protein is Insulin-induced gene 2 protein.